The sequence spans 191 residues: Peptidyl-tRNA hydrolase (191 aa).

A tRNA-binding site is contributed by Tyr-16. The Proton acceptor role is filled by His-21. Phe-66, Asn-68, and Asn-114 together coordinate tRNA.

The protein belongs to the PTH family. Monomer.

It is found in the cytoplasm. It carries out the reaction an N-acyl-L-alpha-aminoacyl-tRNA + H2O = an N-acyl-L-amino acid + a tRNA + H(+). Its function is as follows. Hydrolyzes ribosome-free peptidyl-tRNAs (with 1 or more amino acids incorporated), which drop off the ribosome during protein synthesis, or as a result of ribosome stalling. In terms of biological role, catalyzes the release of premature peptidyl moieties from peptidyl-tRNA molecules trapped in stalled 50S ribosomal subunits, and thus maintains levels of free tRNAs and 50S ribosomes. The sequence is that of Peptidyl-tRNA hydrolase from Geotalea uraniireducens (strain Rf4) (Geobacter uraniireducens).